A 751-amino-acid polypeptide reads, in one-letter code: Cellulose synthase-like protein G3 (751 aa).

The next 2 helical transmembrane spans lie at 47-67 (IYAV…VHSL) and 72-92 (TTLI…MWAT). Catalysis depends on residues D161 and D466. 6 helical membrane passes run 543–563 (CWAF…LALL), 577–597 (FWLY…DFVL), 617–639 (FSSH…THGF), 674–694 (TVAI…FAWG), 697–717 (LVLE…IYEA), and 731–751 (VCFV…VFLK).

Belongs to the glycosyltransferase 2 family. Plant cellulose synthase-like G subfamily.

The protein resides in the golgi apparatus membrane. In terms of biological role, thought to be a Golgi-localized beta-glycan synthase that polymerize the backbones of noncellulosic polysaccharides (hemicelluloses) of plant cell wall. This Arabidopsis thaliana (Mouse-ear cress) protein is Cellulose synthase-like protein G3 (CSLG3).